Here is a 244-residue protein sequence, read N- to C-terminus: Phosphonates import ATP-binding protein PhnC 2 (244 aa).

In terms of domain architecture, ABC transporter spans 6–244 (IECHNLETAY…LQAQFVVNNQ (239 aa)). 41–48 (GLNGAGKS) contacts ATP.

The protein belongs to the ABC transporter superfamily. Phosphonates importer (TC 3.A.1.9.1) family. As to quaternary structure, the complex is composed of two ATP-binding proteins (PhnC), two transmembrane proteins (PhnE) and a solute-binding protein (PhnD).

It localises to the cell inner membrane. The enzyme catalyses phosphonate(out) + ATP + H2O = phosphonate(in) + ADP + phosphate + H(+). Functionally, part of the ABC transporter complex PhnCDE involved in phosphonates import. Responsible for energy coupling to the transport system. The chain is Phosphonates import ATP-binding protein PhnC 2 from Nostoc sp. (strain PCC 7120 / SAG 25.82 / UTEX 2576).